The sequence spans 688 residues: Phosphoinositide 3-phosphatase (688 aa).

A Myotubularin phosphatase domain is found at 155–637; it reads SWDIYDPIKE…KKVQWWWQLY (483 aa). Cys397 serves as the catalytic Phosphocysteine intermediate. Residues 647–668 are compositionally biased toward basic and acidic residues; that stretch reads ELRHKRDSVPISVDKKSKEHSN. The segment at 647–672 is disordered; the sequence is ELRHKRDSVPISVDKKSKEHSNSDGG.

Belongs to the protein-tyrosine phosphatase family. Non-receptor class myotubularin subfamily.

It is found in the cytoplasm. The enzyme catalyses a 1,2-diacyl-sn-glycero-3-phospho-(1D-myo-inositol-3-phosphate) + H2O = a 1,2-diacyl-sn-glycero-3-phospho-(1D-myo-inositol) + phosphate. Its function is as follows. Lipid phosphatase which dephosphorylates phosphatidylinositol 3-monophosphate (PI3P). Involved in the control of PI3P-dependent signaling and in the maintenance of endosomal system integrity. In Saccharomyces cerevisiae (strain ATCC 204508 / S288c) (Baker's yeast), this protein is Phosphoinositide 3-phosphatase.